The sequence spans 330 residues: Probable WRKY transcription factor 39 (330 aa).

Residues 256–322 (KIADIPPDEY…YEGEHNHSRI (67 aa)) constitute a DNA-binding region (WRKY).

It is found in the nucleus. Its function is as follows. Transcription factor. Interacts specifically with the W box (5'-(T)TGAC[CT]-3'), a frequently occurring elicitor-responsive cis-acting element. The protein is Probable WRKY transcription factor 39 (WRKY39) of Arabidopsis thaliana (Mouse-ear cress).